The sequence spans 416 residues: Lipoyl synthase, mitochondrial (416 aa).

The transit peptide at 1 to 33 (MAAPTRSLRRLSSFRTTISPSLTVTAPIGCRSY) directs the protein to the mitochondrion. C132, C137, C143, C163, C167, C170, and S378 together coordinate [4Fe-4S] cluster. In terms of domain architecture, Radical SAM core spans 148 to 367 (DKSSATATIM…RQRALDMGFL (220 aa)). The tract at residues 396 to 416 (GSGTAERTVDQTAATTDEATR) is disordered. Positions 405–416 (DQTAATTDEATR) are enriched in polar residues.

This sequence belongs to the radical SAM superfamily. Lipoyl synthase family. Requires [4Fe-4S] cluster as cofactor.

It is found in the mitochondrion. It catalyses the reaction [[Fe-S] cluster scaffold protein carrying a second [4Fe-4S](2+) cluster] + N(6)-octanoyl-L-lysyl-[protein] + 2 oxidized [2Fe-2S]-[ferredoxin] + 2 S-adenosyl-L-methionine + 4 H(+) = [[Fe-S] cluster scaffold protein] + N(6)-[(R)-dihydrolipoyl]-L-lysyl-[protein] + 4 Fe(3+) + 2 hydrogen sulfide + 2 5'-deoxyadenosine + 2 L-methionine + 2 reduced [2Fe-2S]-[ferredoxin]. It participates in protein modification; protein lipoylation via endogenous pathway; protein N(6)-(lipoyl)lysine from octanoyl-[acyl-carrier-protein]: step 2/2. Functionally, catalyzes the radical-mediated insertion of two sulfur atoms into the C-6 and C-8 positions of the octanoyl moiety bound to the lipoyl domains of lipoate-dependent enzymes, thereby converting the octanoylated domains into lipoylated derivatives. The chain is Lipoyl synthase, mitochondrial from Penicillium rubens (strain ATCC 28089 / DSM 1075 / NRRL 1951 / Wisconsin 54-1255) (Penicillium chrysogenum).